The sequence spans 37 residues: MKVRSSVKKMCDNCKVVRRHGRVLVICSNVKHKQRQG.

The Zn(2+) site is built by cysteine 11, cysteine 14, cysteine 27, and histidine 32.

The protein belongs to the bacterial ribosomal protein bL36 family. In terms of assembly, part of the 50S ribosomal subunit. It depends on Zn(2+) as a cofactor.

In terms of biological role, binds the 23S rRNA. This chain is Large ribosomal subunit protein bL36 (rpmJ), found in Deinococcus radiodurans (strain ATCC 13939 / DSM 20539 / JCM 16871 / CCUG 27074 / LMG 4051 / NBRC 15346 / NCIMB 9279 / VKM B-1422 / R1).